We begin with the raw amino-acid sequence, 327 residues long: Surface protein P12p (327 aa).

6-Cys domains lie at 21-168 (NIEI…LKKN) and 169-304 (IIFG…FSNY). 6 disulfide bridges follow: Cys-25/Cys-60, Cys-74/Cys-144, Cys-93/Cys-142, Cys-173/Cys-208, Cys-223/Cys-285, and Cys-234/Cys-283. N-linked (GlcNAc...) asparagine glycosylation is found at Asn-246, Asn-264, and Asn-298.

The protein resides in the cell surface. The protein localises to the cell membrane. The protein is Surface protein P12p (P12p) of Plasmodium berghei (strain Anka).